Here is a 142-residue protein sequence, read N- to C-terminus: Large ribosomal subunit protein uL11 (142 aa).

The protein belongs to the universal ribosomal protein uL11 family. In terms of assembly, part of the ribosomal stalk of the 50S ribosomal subunit. Interacts with L10 and the large rRNA to form the base of the stalk. L10 forms an elongated spine to which L12 dimers bind in a sequential fashion forming a multimeric L10(L12)X complex. One or more lysine residues are methylated.

Its function is as follows. Forms part of the ribosomal stalk which helps the ribosome interact with GTP-bound translation factors. This Rhodopseudomonas palustris (strain BisB5) protein is Large ribosomal subunit protein uL11.